A 131-amino-acid polypeptide reads, in one-letter code: Small ribosomal subunit protein uS8 (131 aa).

This sequence belongs to the universal ribosomal protein uS8 family. As to quaternary structure, part of the 30S ribosomal subunit. Contacts proteins S5 and S12.

In terms of biological role, one of the primary rRNA binding proteins, it binds directly to 16S rRNA central domain where it helps coordinate assembly of the platform of the 30S subunit. This Ralstonia pickettii (strain 12J) protein is Small ribosomal subunit protein uS8.